A 142-amino-acid chain; its full sequence is Large ribosomal subunit protein uL13 (142 aa).

It belongs to the universal ribosomal protein uL13 family. Part of the 50S ribosomal subunit.

Functionally, this protein is one of the early assembly proteins of the 50S ribosomal subunit, although it is not seen to bind rRNA by itself. It is important during the early stages of 50S assembly. The protein is Large ribosomal subunit protein uL13 of Caldicellulosiruptor saccharolyticus (strain ATCC 43494 / DSM 8903 / Tp8T 6331).